The sequence spans 430 residues: Serine/threonine transporter SstT (430 aa).

9 helical membrane-spanning segments follow: residues 24 to 44 (IIVGLIIGTVLALTMPHVTWI), 47 to 67 (FGTLFVAALKAAAPILVFVLV), 82 to 102 (FGTVLFLYLFTTFLAAVVAVL), 144 to 164 (AIIDGNYICILMWACLFGLAM), 186 to 206 (VIRWVINLAPFGIMGLVFTNV), 223 to 243 (LLVGTMLLMVLVFGPLVIFIF), 294 to 314 (IPLGATINMNGAAITITIMAM), 320 to 340 (LGIQISLPAAILLSVVSALGA), and 361 to 381 (FGISNDIAMQVVGVGFIIGVI).

It belongs to the dicarboxylate/amino acid:cation symporter (DAACS) (TC 2.A.23) family.

The protein resides in the cell membrane. It catalyses the reaction L-serine(in) + Na(+)(in) = L-serine(out) + Na(+)(out). The catalysed reaction is L-threonine(in) + Na(+)(in) = L-threonine(out) + Na(+)(out). Functionally, involved in the import of serine and threonine into the cell, with the concomitant import of sodium (symport system). The chain is Serine/threonine transporter SstT from Bifidobacterium adolescentis (strain ATCC 15703 / DSM 20083 / NCTC 11814 / E194a).